We begin with the raw amino-acid sequence, 132 residues long: MNLSDPLGDMLTRIRNGQKARMSVITSPASKLRTNVLEVLKREGYIRGYNVEDVRPGVRNLRIELKYHEGEPVIKEIHRVSKPGRRIYSKIADLPRVYNGLGIAILSTPRGVMSDAEARAANVGGEVLCKVF.

It belongs to the universal ribosomal protein uS8 family. In terms of assembly, part of the 30S ribosomal subunit. Contacts proteins S5 and S12.

Its function is as follows. One of the primary rRNA binding proteins, it binds directly to 16S rRNA central domain where it helps coordinate assembly of the platform of the 30S subunit. The chain is Small ribosomal subunit protein uS8 from Rhodospirillum centenum (strain ATCC 51521 / SW).